The primary structure comprises 333 residues: Protoheme IX farnesyltransferase (333 aa).

7 helical membrane-spanning segments follow: residues 63–83 (LACTLGGGALAAAAAGVLNCI), 109–129 (AAFIGAISCTLAAAALLVSGV), 132–152 (LAAGLSLLGLCSYVLLYTAIL), 160–180 (IVIGGVAGAIPPLVGAAAASG), 188–208 (WLFALVMLWTPAHFWALALLL), 245–265 (GFGVWALPEGGLLYGLLLIPF), and 292–312 (WSIFYMFGICLLLVVSRLPMA).

The protein belongs to the UbiA prenyltransferase family. Protoheme IX farnesyltransferase subfamily.

It is found in the cell inner membrane. It catalyses the reaction heme b + (2E,6E)-farnesyl diphosphate + H2O = Fe(II)-heme o + diphosphate. Its pathway is porphyrin-containing compound metabolism; heme O biosynthesis; heme O from protoheme: step 1/1. Its function is as follows. Converts heme B (protoheme IX) to heme O by substitution of the vinyl group on carbon 2 of heme B porphyrin ring with a hydroxyethyl farnesyl side group. The protein is Protoheme IX farnesyltransferase of Prochlorococcus marinus (strain MIT 9303).